The following is a 443-amino-acid chain: F-box/LRR-repeat protein At2g42720 (443 aa).

The F-box domain occupies 1 to 47 (MDRISSLPDEILEHILSFLSTKEAALTSSLSTRWKNVFVFVPSLHLD). 6 LRR repeats span residues 139–167 (KLRL…CLDT), 169–194 (DFDG…VLED), 201–236 (CGSV…ELSC), 271–296 (SSHL…HLTS), 323–348 (DKKQ…VFKG), and 363–389 (CSGI…SYQG).

This is F-box/LRR-repeat protein At2g42720 from Arabidopsis thaliana (Mouse-ear cress).